Here is a 54-residue protein sequence, read N- to C-terminus: Conotoxin vc5a (54 aa).

An N-terminal signal peptide occupies residues 1 to 14 (VILLLITSTPSVDA). A propeptide spanning residues 15 to 42 (RLKAKDNMPLASFHDNAKRTLQTRLINT) is cleaved from the precursor. Residue proline 49 is modified to 4-hydroxyproline. Isoleucine 53 carries the post-translational modification Isoleucine amide.

This sequence belongs to the conotoxin T superfamily. Contains 2 disulfide bonds that can be either 'C1-C3, C2-C4' or 'C1-C4, C2-C3', since these disulfide connectivities have been observed for conotoxins with cysteine framework V (for examples, see AC P0DQQ7 and AC P81755). In terms of tissue distribution, expressed by the venom duct.

The protein resides in the secreted. The chain is Conotoxin vc5a from Conus victoriae (Queen Victoria cone).